Here is a 443-residue protein sequence, read N- to C-terminus: MSSQLPILTVSQLNRQVKGFLENEIGLVHVEGEISNLSKPSSGHYYFTLKDSTAQIRCAFFKNRHSSSLLRNFNDGQQIVASGKLSLYEARGEYQLIVEEIVEAGMGVLYQRFEELKIKLASEGLFNPERKKTLPRIPETIGIITSPTGAAIQDILSTLARRFPIARVIIYPSEVQGQTAPQQLVNALKLANAHKRCQVLILARGGGSIEDLWAFNDEYLARQIAISEIPVVSGIGHETDFTIADFVADYRAETPTAAATAVTPNCIELFNILDTAIYRLHDAIIRLIKGLQLKLNHLIDKIASPRQAISTYWQTLDYLERQLISAMTQFINLNINKVNIFSTQLQASNPKIQIERTKIQLQQLIMQLTQEIRIKVNQLKNQLSTNLSTLHAVSPLATLDRGYAIVSKNQRILFAAQQAQIGDTINIRLAKGSLACEVTQIKD.

The protein belongs to the XseA family. In terms of assembly, heterooligomer composed of large and small subunits.

Its subcellular location is the cytoplasm. It carries out the reaction Exonucleolytic cleavage in either 5'- to 3'- or 3'- to 5'-direction to yield nucleoside 5'-phosphates.. In terms of biological role, bidirectionally degrades single-stranded DNA into large acid-insoluble oligonucleotides, which are then degraded further into small acid-soluble oligonucleotides. This Legionella pneumophila (strain Corby) protein is Exodeoxyribonuclease 7 large subunit.